A 1120-amino-acid polypeptide reads, in one-letter code: Transcription-repair-coupling factor (1120 aa).

Residues 591-756 (DLTNGMLMDR…MTGLKELSII (166 aa)) form the Helicase ATP-binding domain. 604 to 611 (GDVGFGKT) serves as a coordination point for ATP. The short motif at 709-712 (DEEQ) is the DEEQ box element. The 157-residue stretch at 777-933 (IIRDALLREH…TIASHDADLR (157 aa)) folds into the Helicase C-terminal domain.

This sequence in the N-terminal section; belongs to the UvrB family. The protein in the C-terminal section; belongs to the helicase family. RecG subfamily.

Its subcellular location is the cytoplasm. Functionally, couples transcription and DNA repair by recognizing RNA polymerase (RNAP) stalled at DNA lesions. Mediates ATP-dependent release of RNAP and its truncated transcript from the DNA, and recruitment of nucleotide excision repair machinery to the damaged site. This chain is Transcription-repair-coupling factor, found in Rickettsia prowazekii (strain Madrid E).